Consider the following 156-residue polypeptide: LIM domain only protein 3 (156 aa).

LIM zinc-binding domains lie at 22-84 (KGCA…LFGV) and 86-148 (GNCA…GLMK).

The chain is LIM domain only protein 3 from Xenopus laevis (African clawed frog).